An 857-amino-acid polypeptide reads, in one-letter code: MAKKDTTPMMKQYYEIKEQYPDAFLFYRVGDFYELFEDDAVKGAQILELTLTHRSNKTKNPIPMAGVPHLAVDTYVNTLVEKGYKVALCEQLEDPKKAKGMVKRGIIQLITPGTMMHERPDQAKDSNYLTSVISTNSGFGLAYSDLSTGETFSTHLTDFEGVANELLSLQTREVVYNGHLTEANKDFLKKANITVSEPVKVEGEHAEISYVTQNLTDDAEIKATKQLVAYLLSTQKRSLAHLQVAQSYEPTQYLQMSHTVQTNLELIKSAKTSKKMGSLFWLLDKTSTAMGGRLLKSWIERPLLSVTEITRRQEMVQALLDDYFTREKVIDSLKGVYDLERLTGRIAFGSVNAREMLQLAHSLGAIPDILNSLLETNNPHLQNFAKQIDPLKGIHDLIVNTIVDNPPLLTTEGGLIREGVSDQLDRYRDAMNNGKKWLSEMESHEREVTGINNLKVGYNKVFGYYIEVTNSNKDKVPTDRYTRKQTLTNAERYITPDLKEHESLILEAEAKSTGLEYDLFVKLRENVKKYIPALQKLAKQVASLDVLTNFATVSEQNNYVRPDFTVDKQEINVVNGRHPVVEQVMTAGSYIPNDVKMDQDTDIFLITGPNMSGKSTYMRQMALIAIMAQIGCFVPADSATLPIFDQIFTRIGAADDLISGQSTFMVEMSEANDALQHATKRSLVLFDEIGRGTATYDGMALAGAIVKYLHDKVGAKTLFATHYHELTDLDQTLKHLKNIHVGATEENGKLIFLHKILPGPADQSYGIHVAQLAGLPHKVLREATTMLKRLEKQGAGELQPASEQLDLFTAEEASVPAISDDEKDVLDDIQNVYLADKTPLQVMELVAQWQQELKDKD.

An ATP-binding site is contributed by 608-615 (GPNMSGKS).

It belongs to the DNA mismatch repair MutS family.

In terms of biological role, this protein is involved in the repair of mismatches in DNA. It is possible that it carries out the mismatch recognition step. This protein has a weak ATPase activity. In Lactobacillus gasseri (strain ATCC 33323 / DSM 20243 / BCRC 14619 / CIP 102991 / JCM 1131 / KCTC 3163 / NCIMB 11718 / NCTC 13722 / AM63), this protein is DNA mismatch repair protein MutS.